The sequence spans 482 residues: MESPVRLSLLYVVLASLLLPGRSVFINRERANNVLQRIRRANSFFEEIKKGNLERECVEEICSFEEAREVFEDNEKTTEFWNKYEDGDQCESSPCQNQGECRDGLGSYTCTCTEGFEGKNCELFVRKLCSLDNGDCDQFCREEQNSVVCSCAKGYFLGNDGKSCLSTAPFPCGKTNKGRAKRSVALNTSNSEPDPEDLMPDADILYPTESPSELLNLNKTEPEANSDDVIRIVGGQECKRGECPWQALLFSDEETDGFCGGTILNEFYILTAAHCLHQAKRFKVRVGDLNTEQEDGGEMVHEVDMIIKHNKFQRDTYDFDIAMLRLKTPITFRENVAPACLPQKDWAEATLMTQKTGIVSGFGRTHEKGRQSKVLKMMEVPYVDRNTCRLSTSFSITQNMFCAGYDAKQEDACQGDSGGPHVTRFKDTYFVTGIVSWGEGCARKGKYGIYTKVTAFLKWIDRSMKARVGPTSETPRLTHPPY.

Positions 1-20 are cleaved as a signal peptide; the sequence is MESPVRLSLLYVVLASLLLP. Residues 21–40 constitute a propeptide that is removed on maturation; that stretch reads GRSVFINRERANNVLQRIRR. Residues 41 to 85 form the Gla domain; that stretch reads ANSFFEEIKKGNLERECVEEICSFEEAREVFEDNEKTTEFWNKYE. A 4-carboxyglutamate mark is found at Glu46, Glu47, Glu54, Glu56, Glu59, Glu60, Glu65, Glu66, Glu69, Glu72, Glu75, and Glu79. An intrachain disulfide couples Cys57 to Cys62. Residues 86-122 form the EGF-like 1; calcium-binding domain; it reads DGDQCESSPCQNQGECRDGLGSYTCTCTEGFEGKNCE. Cystine bridges form between Cys90–Cys101, Cys95–Cys110, Cys112–Cys121, Cys129–Cys140, Cys136–Cys149, Cys151–Cys164, Cys172–Cys340, Cys238–Cys243, Cys259–Cys275, Cys388–Cys402, and Cys413–Cys441. Asp103 carries the (3R)-3-hydroxyaspartate modification. Residues 125 to 165 enclose the EGF-like 2 domain; sequence VRKLCSLDNGDCDQFCREEQNSVVCSCAKGYFLGNDGKSCL. Positions 184-231 are cleaved as a propeptide — activation peptide; that stretch reads VALNTSNSEPDPEDLMPDADILYPTESPSELLNLNKTEPEANSDDVIR. 2 N-linked (GlcNAc...) asparagine glycosylation sites follow: Asn187 and Asn218. Residues 232 to 465 enclose the Peptidase S1 domain; it reads IVGGQECKRG…FLKWIDRSMK (234 aa). Active-site charge relay system residues include His274 and Asp320. Ser417 acts as the Charge relay system in catalysis.

Belongs to the peptidase S1 family. As to quaternary structure, the two chains are formed from a single-chain precursor by the excision of two Arg residues and are held together by 1 or more disulfide bonds. Forms a heterodimer with SERPINA5. Interacts with ixolaris, an anticoagulant protein from Ixodes scapularis saliva. The vitamin K-dependent, enzymatic carboxylation of some glutamate residues allows the modified protein to bind calcium. Post-translationally, N- and O-glycosylated. In terms of processing, proteolytically cleaved and activated by cathepsin CTSG. The activation peptide is cleaved by factor IXa (in the intrinsic pathway), or by factor VIIa (in the extrinsic pathway). The iron and 2-oxoglutarate dependent 3-hydroxylation of aspartate and asparagine is (R) stereospecific within EGF domains. As to expression, plasma; synthesized in the liver.

Its subcellular location is the secreted. It catalyses the reaction Selective cleavage of Arg-|-Thr and then Arg-|-Ile bonds in prothrombin to form thrombin.. With respect to regulation, inhibited by SERPINA5. Its function is as follows. Factor Xa is a vitamin K-dependent glycoprotein that converts prothrombin to thrombin in the presence of factor Va, calcium and phospholipid during blood clotting. Factor Xa activates pro-inflammatory signaling pathways in a protease-activated receptor (PAR)-dependent manner. This chain is Coagulation factor X (F10), found in Rattus norvegicus (Rat).